A 534-amino-acid chain; its full sequence is MKKKISQAIIKFFKNENLIIDESKLIIEKSKNFGDYSSNVALIFAKQNKIDSLKLAQTIKNQLLSENLNLEKIEIAPPGFINFFISKNEYANIVSEIIQKGENFGRYSLQKKINLEFVSANPTGFLHLGHLRGAVIGDILANILEFSGNFVFREYYINDFGSQIDRLVGSVFSRYQQIFKKFPLPEEAYLGEDIIWCAQKFFQIYANKFENSSLDDLEAYKIFREKSIEIFLDEIKADLANLSIKFDVFSSESELFRTEKVQKNLANLPFVYKKEEAIWLKTSKFGDQKDRVLVKKNGEFTYFSSDIAYHFEKINSNFKPDFLINIWGADHIGYVDRMKAALKTVNLNQKLDILLYQLVKLFKNGQEFKMSKRMGKTFTIKDLLELVDQDAIRYFISERSYNSLVEFDIGLAAKISLQNPLFLIQYAHARASKLLANSTIAPEKKLKFEAENETILISKLKQFEEIVLKITKNYKINLLNKYLLELANLFNSFYSNSKIIGNQNQNSLLSLTKAVQIVLKNGLKLLGIKAKERI.

Residues 120 to 130 (ANPTGFLHLGH) carry the 'HIGH' region motif.

It belongs to the class-I aminoacyl-tRNA synthetase family. Monomer.

The protein localises to the cytoplasm. The enzyme catalyses tRNA(Arg) + L-arginine + ATP = L-arginyl-tRNA(Arg) + AMP + diphosphate. The protein is Arginine--tRNA ligase of Mesomycoplasma hyopneumoniae (strain 232) (Mycoplasma hyopneumoniae).